The following is a 326-amino-acid chain: Probable sodium/potassium-transporting ATPase subunit beta-3 (326 aa).

Topologically, residues 1–59 (MMSSRTRKIYLFVFMFISTSLQLMNGEAKAEPETFRQFLYNKQKGTVLGRTGTSWCQIT) are cytoplasmic. The chain crosses the membrane as a helical; Signal-anchor for type II membrane protein span at residues 60–80 (VFYIIFYIFLSAFFIGCLAIF). At 81-326 (LKTLDPKVPR…DKKPVAAPAA (246 aa)) the chain is on the lumenal side. Residues asparagine 144 and asparagine 147 are each glycosylated (N-linked (GlcNAc...) asparagine). Cysteine 234 and cysteine 291 are disulfide-bonded.

This sequence belongs to the X(+)/potassium ATPases subunit beta family. In terms of assembly, the sodium/potassium-transporting ATPase is composed of a catalytic alpha subunit, an auxiliary non-catalytic beta subunit and an additional regulatory subunit.

The protein resides in the cell membrane. This is the non-catalytic component of the active enzyme, which catalyzes the hydrolysis of ATP coupled with the exchange of Na(+) and K(+) ions across the plasma membrane. The beta subunit regulates, through assembly of alpha/beta heterodimers, the number of sodium pumps transported to the plasma membrane. Implicated in genomic response to various soil bacteria that affects fitness, lifespan and brood size. This chain is Probable sodium/potassium-transporting ATPase subunit beta-3 (nkb-3), found in Caenorhabditis briggsae.